The primary structure comprises 333 residues: Fructose-1,6-bisphosphatase class 1 (333 aa).

Positions 92, 113, 115, and 116 each coordinate Mg(2+). Substrate-binding positions include 116 to 119, asparagine 209, tyrosine 242, and lysine 272; that span reads DGSS. Mg(2+) is bound at residue glutamate 278.

The protein belongs to the FBPase class 1 family. As to quaternary structure, homotetramer. It depends on Mg(2+) as a cofactor.

The protein resides in the cytoplasm. The catalysed reaction is beta-D-fructose 1,6-bisphosphate + H2O = beta-D-fructose 6-phosphate + phosphate. It functions in the pathway carbohydrate biosynthesis; Calvin cycle. The sequence is that of Fructose-1,6-bisphosphatase class 1 from Chlorobium phaeobacteroides (strain BS1).